We begin with the raw amino-acid sequence, 310 residues long: Olfactory receptor 4C11 (310 aa).

Residues 1 to 23 (MQQNNSVPEFILLGLTQDPLRQK) lie on the Extracellular side of the membrane. N-linked (GlcNAc...) asparagine glycosylation occurs at N4. Residues 24-47 (IVFVIFLIFYMGTVVGNMLIIVTI) traverse the membrane as a helical segment. The Cytoplasmic segment spans residues 48–55 (KSSRTLGS). The chain crosses the membrane as a helical span at residues 56 to 77 (PMYFFLFYLSFADSCFSTSTAP). At 78–98 (RLIVDALSEKKIITYNECMTQ) the chain is on the extracellular side. The cysteines at positions 95 and 187 are disulfide-linked. The helical transmembrane segment at 99–118 (VFALHLFGCMEIFVLILMAV) threads the bilayer. Residues 119 to 137 (DRYVAICKPLRYPTIMSQQ) lie on the Cytoplasmic side of the membrane. Residues 138-156 (VCIILIVLAWIGSLIHSTA) form a helical membrane-spanning segment. At 157-193 (QIILALRLPFCGPYLIDHYCCDLQPLLKLACMDTYMI) the chain is on the extracellular side. The helical transmembrane segment at 194-217 (NLLLVSNSGAICSSSFMILIISYI) threads the bilayer. The Cytoplasmic portion of the chain corresponds to 218–233 (VILHSLRNHSAKGKKK). A helical membrane pass occupies residues 234–256 (ALSACTSHIIVVILFFGPCIFIY). Over 257–267 (TRPPTTFPMDK) the chain is Extracellular. A helical transmembrane segment spans residues 268 to 287 (MVAVFYTIGTPFLNPLIYTL). Residues 288-310 (RNAEVKNAMRKLWHGKIISENKG) lie on the Cytoplasmic side of the membrane.

The protein belongs to the G-protein coupled receptor 1 family.

It localises to the cell membrane. Its function is as follows. Odorant receptor. The chain is Olfactory receptor 4C11 (OR4C11) from Homo sapiens (Human).